A 708-amino-acid chain; its full sequence is UvrABC system protein B (708 aa).

In terms of domain architecture, Helicase ATP-binding spans 32–419; the sequence is EGIQSGKTAQ…GGEVVEQIIR (388 aa). Residue 45–52 participates in ATP binding; sequence GATGTGKT. A Beta-hairpin motif is present at residues 98 to 121; it reads YYDYYQPEAYIPQRDVYIEKDSSI. The Helicase C-terminal domain maps to 436 to 598; it reads QVTHLLEQVR…IVPKTVRKSI (163 aa). In terms of domain architecture, UVR spans 627–662; it reads IEYVDKLEQEMLAAAEDLEFERAARLRDRVLQLKEH. Residues 668–708 form a disordered region; the sequence is SEVEIVDEKSAGKSGGRGRGRRGAKKKGASKGTKIPRPKRG. Over residues 683–708 the composition is skewed to basic residues; it reads GRGRGRRGAKKKGASKGTKIPRPKRG.

This sequence belongs to the UvrB family. As to quaternary structure, forms a heterotetramer with UvrA during the search for lesions. Interacts with UvrC in an incision complex.

It is found in the cytoplasm. Functionally, the UvrABC repair system catalyzes the recognition and processing of DNA lesions. A damage recognition complex composed of 2 UvrA and 2 UvrB subunits scans DNA for abnormalities. Upon binding of the UvrA(2)B(2) complex to a putative damaged site, the DNA wraps around one UvrB monomer. DNA wrap is dependent on ATP binding by UvrB and probably causes local melting of the DNA helix, facilitating insertion of UvrB beta-hairpin between the DNA strands. Then UvrB probes one DNA strand for the presence of a lesion. If a lesion is found the UvrA subunits dissociate and the UvrB-DNA preincision complex is formed. This complex is subsequently bound by UvrC and the second UvrB is released. If no lesion is found, the DNA wraps around the other UvrB subunit that will check the other stand for damage. The protein is UvrABC system protein B of Rhodopirellula baltica (strain DSM 10527 / NCIMB 13988 / SH1).